The following is a 505-amino-acid chain: Protein disulfide-isomerase A3 (505 aa).

The signal sequence occupies residues 1–24 (MRFSCLALLPGVALLLASALLASA). Positions 25-133 (SDVLELTDEN…IVSHLKKQAG (109 aa)) constitute a Thioredoxin 1 domain. Catalysis depends on nucleophile residues cysteine 57 and cysteine 60. A disulfide bond links cysteine 57 and cysteine 60. Residue lysine 61 is modified to N6-methyllysine. A disulfide bridge connects residues cysteine 85 and cysteine 92. Lysine 129 is modified (N6-succinyllysine). The residue at position 152 (lysine 152) is an N6-acetyllysine. Lysine 218 is modified (N6-succinyllysine). Position 252 is an N6-acetyllysine (lysine 252). Position 319 is a phosphothreonine (threonine 319). Residues 343–485 (SRDGKALERF…FISYLQREAT (143 aa)) enclose the Thioredoxin 2 domain. N6-acetyllysine is present on lysine 362. Active-site nucleophile residues include cysteine 406 and cysteine 409. A disulfide bridge connects residues cysteine 406 and cysteine 409. The tract at residues 484–505 (ATNPPIIQEEKPKKKKKAQEDL) is disordered. Over residues 491 to 505 (QEEKPKKKKKAQEDL) the composition is skewed to basic and acidic residues. Lysine 494 carries the N6-acetyllysine modification. A Prevents secretion from ER motif is present at residues 502 to 505 (QEDL).

The protein belongs to the protein disulfide isomerase family. Part of the major histocompatibility complex class I (MHC I) peptide loading complex composed of TAP1, TAP2, B2M, MHC heavy chain, TAPBP, PDIA3, and CALR. Interacts with ERP27 and CANX. Interacts with SERPINA2 and with SERPINA1. Interacts with ATP2A2. Within the major histocompatibility complex class I (MHC I) peptide loading complex forms reversible disulfide-linked heterodimers with TAPBP as part of its protein folding chaperone activity. This is essential to assist the dynamic assembly of the MHC I complex with high affinity antigens in the endoplasmic reticulum. In terms of processing, phosphorylated. In terms of tissue distribution, in caput epididymal spermatozoa, detected in the head, mid and principal pieces. In cauda epididymal spermatozoa detected only in the acrosome (at protein level).

The protein resides in the endoplasmic reticulum. Its subcellular location is the endoplasmic reticulum lumen. It is found in the melanosome. It catalyses the reaction Catalyzes the rearrangement of -S-S- bonds in proteins.. Its activity is regulated as follows. Seems to be inhibited by acidic phospholipids. Functionally, protein disulfide isomerase that catalyzes the formation, isomerization, and reduction or oxidation of disulfide bonds in client proteins and functions as a protein folding chaperone. Core component of the major histocompatibility complex class I (MHC I) peptide loading complex where it functions as an essential folding chaperone for TAPBP. Through TAPBP, assists the dynamic assembly of the MHC I complex with high affinity antigens in the endoplasmic reticulum. Therefore, plays a crucial role in the presentation of antigens to cytotoxic T cells in adaptive immunity. The protein is Protein disulfide-isomerase A3 (Pdia3) of Rattus norvegicus (Rat).